Reading from the N-terminus, the 600-residue chain is Melanophilin (600 aa).

The 121-residue stretch at 4-124 (KLDLSKLTDE…IGSLEWYYEH (121 aa)) folds into the RabBD domain. Residues 64 to 107 (CARCLQPYQLLVNSKRQCLECGLFTCKSCGRVHPEEQGWICDPC) form an FYVE-type zinc finger. 4 disordered regions span residues 146–277 (QGGA…AELC), 390–465 (EELT…LSEL), 499–541 (TVKP…AKAM), and 553–600 (NSLK…AHQS). 2 stretches are compositionally biased toward basic and acidic residues: residues 232–243 (CSEKAAPHKAEG) and 409–420 (KDEKAEPNRDKS). Residues 373-496 (GVRTEADVEE…ESRIAALRAA (124 aa)) are a coiled coil. The segment covering 558 to 569 (QGKDDDSFDRKS) has biased composition (basic and acidic residues).

In terms of assembly, binds RAB27A that has been activated by GTP-binding via its N-terminus. Binds MYO5A via its C-terminal coiled coil domain.

The protein resides in the cytoplasm. Rab effector protein involved in melanosome transport. Serves as link between melanosome-bound RAB27A and the motor protein MYO5A. This chain is Melanophilin (MLPH), found in Homo sapiens (Human).